The sequence spans 116 residues: Nucleoid-associated protein P9515_00191 (116 aa).

A compositionally biased stretch (basic and acidic residues) spans 89-98 (STTTMKERMN). The disordered stretch occupies residues 89–116 (STTTMKERMNDLTGGLNLNLPGLDNNDS). The span at 99–116 (DLTGGLNLNLPGLDNNDS) shows a compositional bias: low complexity.

Belongs to the YbaB/EbfC family. In terms of assembly, homodimer.

It is found in the cytoplasm. The protein localises to the nucleoid. Its function is as follows. Binds to DNA and alters its conformation. May be involved in regulation of gene expression, nucleoid organization and DNA protection. The polypeptide is Nucleoid-associated protein P9515_00191 (Prochlorococcus marinus (strain MIT 9515)).